The sequence spans 349 residues: Protein-glutamate methylesterase/protein-glutamine glutaminase (349 aa).

One can recognise a Response regulatory domain in the interval 5-122 (RVLSVDDSAL…REGMLAYNEM (118 aa)). At aspartate 56 the chain carries 4-aspartylphosphate. Residues 152-344 (LLSSEKLIAI…QQMLAKISAG (193 aa)) enclose the CheB-type methylesterase domain. Catalysis depends on residues serine 164, histidine 190, and aspartate 286.

The protein belongs to the CheB family. Interacts with CheA. Binds to a C-terminal pentapeptide sequence carried by certain receptors. Post-translationally, phosphorylated by CheA. Phosphorylation of the N-terminal regulatory domain activates the methylesterase activity.

Its subcellular location is the cytoplasm. The enzyme catalyses [protein]-L-glutamate 5-O-methyl ester + H2O = L-glutamyl-[protein] + methanol + H(+). The catalysed reaction is L-glutaminyl-[protein] + H2O = L-glutamyl-[protein] + NH4(+). Methylesterase activity is activated via phosphorylation in response to negative chemotactic stimuli and is inhibited in the presence of attractants. Activation requires both CheA and CheW. Involved in chemotaxis. Part of a chemotaxis signal transduction system that modulates chemotaxis in response to various stimuli. Catalyzes the demethylation of specific methylglutamate residues introduced into the chemoreceptors (methyl-accepting chemotaxis proteins or MCP) by CheR. Also mediates the irreversible deamidation of specific glutamine residues to glutamic acid. Catalyzes its own deactivation by removing the activating phosphoryl group. The protein is Protein-glutamate methylesterase/protein-glutamine glutaminase of Escherichia coli (strain K12).